The following is an 858-amino-acid chain: Ubiquitin carboxyl-terminal hydrolase 5 (858 aa).

Alanine 2 carries the N-acetylalanine modification. The segment at 74–96 (RRTRRPKEEDPTTGTGDPPRKKP) is disordered. Lysine 113 is covalently cross-linked (Glycyl lysine isopeptide (Lys-Gly) (interchain with G-Cter in SUMO)). 2 positions are modified to phosphoserine: serine 149 and serine 156. Residues 175-283 (QVSKHAFSLK…EHLSHFGIDM (109 aa)) form a UBP-type; degenerate zinc finger. A disulfide bridge connects residues cysteine 195 and cysteine 816. Zn(2+)-binding residues include cysteine 199 and cysteine 202. Residue tryptophan 209 coordinates substrate. Residue cysteine 219 coordinates Zn(2+). 221–224 (RRYF) provides a ligand contact to substrate. Histidine 232 contacts Zn(2+). Tyrosine 259, tyrosine 261, and aspartate 264 together coordinate substrate. A Phosphothreonine modification is found at threonine 292. The USP domain maps to 326–856 (TGIRNLGNSC…LGYIYFYQRV (531 aa)). Cysteine 335 functions as the Nucleophile in the catalytic mechanism. Threonine 623 is subject to Phosphothreonine. UBA domains lie at 654-695 (MLDE…VMSH) and 722-762 (PPPE…IFSH). 3 positions are modified to phosphoserine: serine 779, serine 783, and serine 785. The active-site Proton acceptor is the histidine 818.

It belongs to the peptidase C19 family. As to quaternary structure, homodimer. Interacts with TRIML1. Ubiquitinated by SMURF1; leading to proteasomal degradation. In terms of processing, SUMOylated at Lys-113; SUMOylation affects the interaction with Cav3.2 channels.

The protein localises to the cytoplasm. It is found in the stress granule. It localises to the nucleus. It catalyses the reaction Thiol-dependent hydrolysis of ester, thioester, amide, peptide and isopeptide bonds formed by the C-terminal Gly of ubiquitin (a 76-residue protein attached to proteins as an intracellular targeting signal).. Its function is as follows. Deubiquitinating enzyme that participates in a wide range of cellular processes by specifically cleaving isopeptide bonds between ubiquitin and substrate proteins or ubiquitin itself. Affects thereby important cellular signaling pathways such as NF-kappa-B, Wnt/beta-catenin, and cytokine production by regulating ubiquitin-dependent protein degradation. Participates in the activation of the Wnt signaling pathway by promoting FOXM1 deubiquitination and stabilization that induces the recruitment of beta-catenin to Wnt target gene promoter. Regulates the assembly and disassembly of heat-induced stress granules by mediating the hydrolysis of unanchored ubiquitin chains. Promotes lipopolysaccharide-induced apoptosis and inflammatory response by stabilizing the TXNIP protein. Affects T-cell biology by stabilizing the inhibitory receptor on T-cells PDC1. Acts as a negative regulator of autophagy by regulating ULK1 at both protein and mRNA levels. Acts also as a negative regulator of type I interferon production by simultaneously removing both 'Lys-48'-linked unanchored and 'Lys-63'-linked anchored polyubiquitin chains on the transcription factor IRF3. Modulates the stability of DNA mismatch repair protein MLH1 and counteracts the effect of the ubiquitin ligase UBR4. Upon activation by insulin, it gets phosphorylated through mTORC1-mediated phosphorylation to enhance YTHDF1 stability by removing 'Lys-11'-linked polyubiquitination. May also deubiquitinate other substrates such as the calcium channel CACNA1H. The polypeptide is Ubiquitin carboxyl-terminal hydrolase 5 (UBP5) (Pongo abelii (Sumatran orangutan)).